The chain runs to 178 residues: Cytochrome b6-f complex subunit 4 (178 aa).

Helical transmembrane passes span 36 to 56 (LSYI…GLAV), 95 to 115 (LLGV…PFLE), and 131 to 151 (TVSL…ALPI).

This sequence belongs to the cytochrome b family. PetD subfamily. The 4 large subunits of the cytochrome b6-f complex are cytochrome b6, subunit IV (17 kDa polypeptide, petD), cytochrome f and the Rieske protein, while the 4 small subunits are petG, petL, petM and petN. The complex functions as a dimer.

The protein localises to the plastid. The protein resides in the chloroplast thylakoid membrane. In terms of biological role, component of the cytochrome b6-f complex, which mediates electron transfer between photosystem II (PSII) and photosystem I (PSI), cyclic electron flow around PSI, and state transitions. The chain is Cytochrome b6-f complex subunit 4 from Picea abies (Norway spruce).